The following is a 569-amino-acid chain: 3-(3-hydroxy-phenyl)propionate/3-hydroxycinnamic acid hydroxylase (569 aa).

FAD contacts are provided by residues 12–41 (DVVVVGAGPSGLTLANILGLQGVATLVVDE) and 277–287 (FRKGRLMLAGD).

It belongs to the PheA/TfdB FAD monooxygenase family. Requires FAD as cofactor.

It catalyses the reaction 3-(3-hydroxyphenyl)propanoate + NADH + O2 + H(+) = 3-(2,3-dihydroxyphenyl)propanoate + NAD(+) + H2O. The enzyme catalyses (2E)-3-(3-hydroxyphenyl)prop-2-enoate + NADH + O2 + H(+) = (2E)-3-(2,3-dihydroxyphenyl)prop-2-enoate + NAD(+) + H2O. It participates in aromatic compound metabolism; 3-phenylpropanoate degradation. Its function is as follows. Catalyzes the insertion of one atom of molecular oxygen into position 2 of the phenyl ring of 3-(3-hydroxyphenyl)propionate (3-HPP) and hydroxycinnamic acid (3HCI). The polypeptide is 3-(3-hydroxy-phenyl)propionate/3-hydroxycinnamic acid hydroxylase (Mycolicibacterium vanbaalenii (strain DSM 7251 / JCM 13017 / BCRC 16820 / KCTC 9966 / NRRL B-24157 / PYR-1) (Mycobacterium vanbaalenii)).